Reading from the N-terminus, the 5146-residue chain is SCO-spondin (5146 aa).

A signal peptide spans 1–17; that stretch reads MLLPALLFGAAWALANG. In terms of domain architecture, EMI spans 18–94; it reads RWCEQTETVL…ACCPGWGGTH (77 aa). 3 N-linked (GlcNAc...) asparagine glycosylation sites follow: Asn-80, Asn-122, and Asn-153. The VWFD 1 domain occupies 185-356; sequence ATCATWSGFH…RLPDSELGCL (172 aa). Intrachain disulfides connect Cys-187–Cys-317, Cys-209–Cys-355, and Cys-231–Cys-237. Asn-255 carries N-linked (GlcNAc...) asparagine glycosylation. One can recognise a TIL 1 domain in the interval 464–519; sequence CPGGQLYSDCASACPPSCSAVGEGSEWSCGEECVSGCECPPGLFWDGALCVPAARC. The 174-residue stretch at 557 to 730 folds into the VWFD 2 domain; sequence AECAVGGDGH…FQVAGGGTCS (174 aa). 2 cysteine pairs are disulfide-bonded: Cys-559–Cys-692 and Cys-583–Cys-729. N-linked (GlcNAc...) asparagine glycosylation occurs at Asn-814. The TIL 2 domain occupies 822 to 875; sequence CPGGQEYQECAPACDRNCGEPEDCGELDNCVAGCNCPLGLLWDPEGQCVPPNLC. N-linked (GlcNAc...) asparagine glycosylation occurs at Asn-906. One can recognise a VWFD 3 domain in the interval 1008–1178; that stretch reads GRCRASGAPH…HSWRLGPLCP (171 aa). Cystine bridges form between Cys-1010-Cys-1142, Cys-1032-Cys-1177, and Cys-1053-Cys-1060. Residues 1271 to 1327 enclose the TIL 3 domain; the sequence is CERGQVYEACGPTCPATCHDHRPEPGWPCRAVACVEGCFCPEGTLLHGGVCLEPAAC. N-linked (GlcNAc...) asparagine glycosylation is present at Asn-1349. 6 LDL-receptor class A domains span residues 1372–1409, 1412–1447, 1448–1484, 1488–1526, 1561–1597, and 1599–1638; these read GCAE…EGCA, VCGE…EQGC, PCPQ…ESCL, DCAP…GHCP, PCGP…SGCD, and PCAP…GACE. 18 disulfide bridges follow: Cys-1373–Cys-1386, Cys-1380–Cys-1399, Cys-1393–Cys-1408, Cys-1413–Cys-1425, Cys-1420–Cys-1438, Cys-1432–Cys-1447, Cys-1449–Cys-1461, Cys-1456–Cys-1474, Cys-1468–Cys-1483, Cys-1489–Cys-1501, Cys-1496–Cys-1514, Cys-1508–Cys-1525, Cys-1562–Cys-1574, Cys-1569–Cys-1587, Cys-1581–Cys-1596, Cys-1600–Cys-1613, Cys-1607–Cys-1626, and Cys-1620–Cys-1637. Asn-1647 carries an N-linked (GlcNAc...) asparagine glycan. In terms of domain architecture, LDL-receptor class A 7 spans 1652–1690; that stretch reads PCPEYSCPDGLCIGFQQVCDGQPDCELAGTAGPSPEEQG. 2 TSP type-1 domains span residues 1691–1745 and 1747–1805; these read CGAW…AACP and DGVW…DGCP. 3 disulfides stabilise this stretch: Cys-1703/Cys-1739, Cys-1707/Cys-1744, and Cys-1718/Cys-1729. Asn-1806 carries N-linked (GlcNAc...) asparagine glycosylation. The region spanning 1809-1865 is the TIL 4 domain; that stretch reads CSGELVFHACVPCPLTCDDISGQATCPPDRPCGGPGCWCPAGQVLGAQGRCVWPRQC. 2 consecutive EGF-like domains span residues 1821 to 1860 and 1861 to 1898; these read CPLT…GRCV and WPRQ…RRCQ. Residues 1906–1962 enclose the TSP type-1 3 domain; it reads NCGWSAWSPWAECLGPCGSRSVQWSFRSPNNPRPAGRGHQCRGLHRKARRCQTEPCE. Disulfide bonds link Cys-1907-Cys-1946, Cys-1918-Cys-1922, and Cys-1956-Cys-1961. Positions 1962 to 2022 constitute a VWFC 1 domain; that stretch reads EGCEQDGRVH…GVGESCCHCV (61 aa). N-linked (GlcNAc...) asparagine glycosylation is found at Asn-2027 and Asn-2127. Cystine bridges form between Cys-2062–Cys-2220, Cys-2226–Cys-2238, Cys-2233–Cys-2251, and Cys-2245–Cys-2260. The region spanning 2062–2220 is the F5/8 type C domain; sequence CYSPLGLARL…GPLRVELLGC (159 aa). One can recognise an LDL-receptor class A 8 domain in the interval 2225–2261; that stretch reads LCLGVGHRCVSGECAPRGAPCDGVEDCKDGSDEEGCV. Residues 2262-2346 are disordered; that stretch reads TPPAGAGRIE…TPTSQPEAQA (85 aa). Composition is skewed to polar residues over residues 2273–2284 and 2331–2343; these read TAWSSAPSSAQP and GSVQ…SQPE. LDL-receptor class A domains are found at residues 2382-2418 and 2442-2478; these read QCSP…RPCA and LCSP…NGCV. Cystine bridges form between Cys-2383–Cys-2395, Cys-2390–Cys-2408, Cys-2402–Cys-2417, Cys-2443–Cys-2455, Cys-2450–Cys-2468, Cys-2462–Cys-2477, Cys-2480–Cys-2516, Cys-2491–Cys-2495, Cys-2526–Cys-2531, Cys-2546–Cys-2583, Cys-2550–Cys-2588, and Cys-2561–Cys-2573. TSP type-1 domains lie at 2479–2532 and 2534–2589; these read DCGL…QACP and AGAW…QPCA. One can recognise a TIL 5 domain in the interval 2611-2654; sequence VPPCPPSCLDPEANRSCSGLCLEGCRCPPGLLLQDAGCLPLSEC. Residues Asn-2624 and Asn-2673 are each glycosylated (N-linked (GlcNAc...) asparagine). 3 TSP type-1 domains span residues 2694–2748, 2751–2807, and 2809–2862; these read PCGW…SACG, VPGW…PVCL, and LGVW…QPCT. 9 disulfides stabilise this stretch: Cys-2695–Cys-2733, Cys-2706–Cys-2710, Cys-2743–Cys-2747, Cys-2763–Cys-2801, Cys-2767–Cys-2806, Cys-2783–Cys-2791, Cys-2821–Cys-2856, Cys-2825–Cys-2861, and Cys-2836–Cys-2846. Asn-2915 and Asn-2946 each carry an N-linked (GlcNAc...) asparagine glycan. 2 TSP type-1 domains span residues 2964 to 3019 and 3020 to 3071; these read ACGW…RPCG and GPAG…GVCP. Disulfide bonds link Cys-2965–Cys-3003, Cys-2976–Cys-2980, and Cys-3013–Cys-3018. N-linked (GlcNAc...) asparagine glycosylation is present at Asn-3041. The TIL 6 domain occupies 3070-3122; sequence CPPGKRWLDCAQGPASCAELSAPRGADQPCHPGCYCPSGMLLLNNACVPTQDC. N-linked (GlcNAc...) asparagine glycosylation is found at Asn-3143 and Asn-3153. TSP type-1 domains follow at residues 3163–3230 and 3232–3287; these read QPTW…PECD and AGGW…LPCP. 6 disulfide bridges follow: Cys-3175-Cys-3224, Cys-3179-Cys-3229, Cys-3190-Cys-3214, Cys-3244-Cys-3281, Cys-3248-Cys-3286, and Cys-3259-Cys-3271. Asn-3290 carries N-linked (GlcNAc...) asparagine glycosylation. The TIL 7 domain maps to 3295–3345; the sequence is EGAEYSACGPPCPRSCDDLVHCVWHCQPGCYCPPGQVLSADGTVHVQPGHC. 2 TSP type-1 domains span residues 3388 to 3450 and 3452 to 3507; these read PGAW…PECP and DGAW…TQCT. Intrachain disulfides connect Cys-3400-Cys-3443, Cys-3404-Cys-3449, Cys-3415-Cys-3427, Cys-3464-Cys-3499, Cys-3467-Cys-3506, and Cys-3477-Cys-3489. Residues Asn-3502, Asn-3580, and Asn-3607 are each glycosylated (N-linked (GlcNAc...) asparagine). Residues 3626-3674 form the TSP type-1 15 domain; that stretch reads LGLWGSWGPWEDCSVSCGGGEQLRFRRCPRPPCPGPARQSRTCRTQVCR. Disulfide bonds link Cys-3638-Cys-3668, Cys-3642-Cys-3673, and Cys-3653-Cys-3658. N-linked (GlcNAc...) asparagine glycosylation is present at Asn-3783. 4 TSP type-1 domains span residues 3802–3858, 3872–3924, 3938–3994, and 3996–4051; these read AGGF…PECP, PGGW…PSCT, NCSW…RACP, and PGGW…TPCE. 3 disulfides stabilise this stretch: Cys-3814/Cys-3852, Cys-3818/Cys-3857, and Cys-3830/Cys-3842. N-linked (GlcNAc...) asparagine glycans are attached at residues Asn-3906 and Asn-3938. 6 disulfides stabilise this stretch: Cys-3939/Cys-3975, Cys-3950/Cys-3954, Cys-3988/Cys-3993, Cys-4008/Cys-4045, Cys-4012/Cys-4050, and Cys-4023/Cys-4035. The TIL 8 domain occupies 4054–4109; that stretch reads CPAGMEVVSCANRCPRRCSDLQEGIVCQEDQACQQGCRCPEGSLEQDGGCVPLGHC. The region spanning 4101-4168 is the VWFC 2 domain; it reads GGCVPLGHCE…AWSPCSRSCG (68 aa). N-linked (GlcNAc...) asparagine glycosylation is present at Asn-4131. TSP type-1 domains are found at residues 4151 to 4204, 4245 to 4300, 4302 to 4358, and 4360 to 4414; these read HCAW…SPCP, LGAW…WPCP, LPDT…GPCL, and ECVW…GNCS. Cystine bridges form between Cys-4152–Cys-4188, Cys-4163–Cys-4167, Cys-4198–Cys-4203, Cys-4257–Cys-4294, Cys-4261–Cys-4299, and Cys-4272–Cys-4284. N-linked (GlcNAc...) asparagine glycosylation occurs at Asn-4341. Disulfide bonds link Cys-4361-Cys-4398, Cys-4372-Cys-4374, and Cys-4408-Cys-4413. Asn-4412 is a glycosylation site (N-linked (GlcNAc...) asparagine). In terms of domain architecture, TIL 9 spans 4418–4473; that stretch reads CAPPFEFQACGSPCTGLCATYLSPWLCQDLPPCQPGCYCPEGLLEQAGGCVPPEQC. The TSP type-1 24 domain maps to 4610-4661; it reads LCQWGPWGAWSPCQVPCSGGFRLRWREAGIPPGGGCRGPWAQTESCNMGPCP. 3 disulfides stabilise this stretch: Cys-4611/Cys-4645, Cys-4622/Cys-4626, and Cys-4655/Cys-4660. The region spanning 4675 to 4721 is the TIL 10 domain; the sequence is DCANQCPRSCVDLWDRVECLQGPCRPGCRCPPGQLVQDGHCVPVSSC. Asn-4729, Asn-4746, Asn-4751, and Asn-4772 each carry an N-linked (GlcNAc...) asparagine glycan. A TSP type-1 25 domain is found at 4761–4814; the sequence is CPTLGPWSAWSNCSAPCGGGTTKRHRSCKEGPGVTPCQAQDMEQQQDCNLQPCP. 3 cysteine pairs are disulfide-bonded: Cys-4773–Cys-4808, Cys-4777–Cys-4813, and Cys-4788–Cys-4797. Positions 4816–4870 constitute a TIL 11 domain; sequence CPPGQVLSACAVSCPRLCSHLQPGTPCMQEPCQLGCDCPRGQLLHNGTCVPPAEC. Residues Asn-4861, Asn-4901, Asn-4947, and Asn-4954 are each glycosylated (N-linked (GlcNAc...) asparagine). Positions 4983-5041 constitute a VWFC 3 domain; sequence CECWHHGRPHPPGSEWQKACESCRCVSGESICTQHCPPLTCAQGETAVQEPGGCCPTCR. Intrachain disulfides connect Cys-5052–Cys-5100, Cys-5066–Cys-5117, Cys-5076–Cys-5133, and Cys-5080–Cys-5135. A CTCK domain is found at 5052-5139; sequence CRHLTELRNL…IHSCQCSACQ (88 aa). A glycan (N-linked (GlcNAc...) asparagine) is linked at Asn-5060.

Belongs to the thrombospondin family. As to expression, subcommissural organ. Located at the boundary of the diencephalon and mesencephalon beneath the posterior commissure at the point where the axons cross the midline.

Its subcellular location is the secreted. The protein localises to the extracellular space. Its function is as follows. Involved in the modulation of neuronal aggregation. May be involved in developmental events during the formation of the central nervous system. The polypeptide is SCO-spondin (SSPO) (Bos taurus (Bovine)).